Reading from the N-terminus, the 430-residue chain is Sulfide-quinone reductase (430 aa).

FAD is bound by residues 9 to 13, 34 to 36, 42 to 43, and threonine 105; these read GGGVG, SDR, and TP. Cysteine 156 (cysteine persulfide intermediate) is an active-site residue. Disulfide bonds link cysteine 280/cysteine 422 and cysteine 419/cysteine 430. FAD contacts are provided by valine 294 and glycine 314. Isoleucine 346 contacts a quinone. Catalysis depends on cysteine 347, which acts as the Cysteine persulfide intermediate. Lysine 382 provides a ligand contact to FAD.

It belongs to the SQRD family. Homotrimer. The cofactor is FAD.

Its subcellular location is the membrane. The catalysed reaction is n a quinone + n hydrogen sulfide + n H(+) = polysulfur(n-2) + n a quinol. In terms of biological role, catalyzes the oxidation of hydrogen sulfide, with the help of a quinone. Consecutive reaction cycles lead to the accumulation of a polysulfide product on the active site Cys residues; these products are released when they exceed a critical length, typically as cyclooctasulfur. This is Sulfide-quinone reductase from Aquifex aeolicus (strain VF5).